A 454-amino-acid polypeptide reads, in one-letter code: Probable ECA polymerase (454 aa).

11 consecutive transmembrane segments (helical) span residues 3-23, 39-59, 61-81, 119-139, 154-174, 180-200, 201-221, 222-242, 340-360, 377-397, and 409-429; these read LGQF…ILTL, FSML…MLVF, FGVA…ATAF, LALV…FLLF, GVAL…VYFL, AWFF…VIVG, GTRA…IVRG, WITL…MFWL, LVVM…GLII, YKAA…IVLA, and VFFC…YWLF.

It belongs to the WzyE family. As to quaternary structure, probably part of a complex composed of WzxE, WzyE and WzzE.

The protein localises to the cell inner membrane. The protein operates within bacterial outer membrane biogenesis; enterobacterial common antigen biosynthesis. Probably involved in the polymerization of enterobacterial common antigen (ECA) trisaccharide repeat units. This chain is Probable ECA polymerase, found in Yersinia pseudotuberculosis serotype O:1b (strain IP 31758).